Consider the following 330-residue polypeptide: MALPVYYDKDIDLGVIQSLQVGIIGYGAQGEAQALNLRDSKVKARIGLYQGSLSVSKAKKEGFEVLEVKELVQNSDVIMALLPDELHKEVLEKEVIPFLKEGQIVGFAHGFSVHFNQVVLPKGVGAILVAPKGPGSALREEYLKNRGLYHLIAIEQESSIHNAKAVALSYAKAMGGGRMGVLETSFKEECESDLFGEQAVLCGGLEAIVRMGFETLIKAGYPEELAYFECVHEVKLVADLLHYKGVEGLRKHISNTAEFGAIKAREPMGKLLKKRMQKILKKIQNGSFAKDFLLEKSLNYPRLNTERKALKETKIEQIGEILRAPFNHKK.

A KARI N-terminal Rossmann domain is found at 3-184; that stretch reads LPVYYDKDID…GGGRMGVLET (182 aa). NADP(+) contacts are provided by residues 26–29, serine 52, and serine 54; that span reads YGAQ. Histidine 109 is a catalytic residue. Glycine 135 serves as a coordination point for NADP(+). Residues 185-329 enclose the KARI C-terminal knotted domain; sequence SFKEECESDL…EILRAPFNHK (145 aa). 4 residues coordinate Mg(2+): aspartate 193, glutamate 197, glutamate 229, and glutamate 233. Serine 254 contributes to the substrate binding site.

Belongs to the ketol-acid reductoisomerase family. Mg(2+) serves as cofactor.

It catalyses the reaction (2R)-2,3-dihydroxy-3-methylbutanoate + NADP(+) = (2S)-2-acetolactate + NADPH + H(+). The catalysed reaction is (2R,3R)-2,3-dihydroxy-3-methylpentanoate + NADP(+) = (S)-2-ethyl-2-hydroxy-3-oxobutanoate + NADPH + H(+). It participates in amino-acid biosynthesis; L-isoleucine biosynthesis; L-isoleucine from 2-oxobutanoate: step 2/4. The protein operates within amino-acid biosynthesis; L-valine biosynthesis; L-valine from pyruvate: step 2/4. Its function is as follows. Involved in the biosynthesis of branched-chain amino acids (BCAA). Catalyzes an alkyl-migration followed by a ketol-acid reduction of (S)-2-acetolactate (S2AL) to yield (R)-2,3-dihydroxy-isovalerate. In the isomerase reaction, S2AL is rearranged via a Mg-dependent methyl migration to produce 3-hydroxy-3-methyl-2-ketobutyrate (HMKB). In the reductase reaction, this 2-ketoacid undergoes a metal-dependent reduction by NADPH to yield (R)-2,3-dihydroxy-isovalerate. The polypeptide is Ketol-acid reductoisomerase (NADP(+)) (Helicobacter pylori (strain ATCC 700392 / 26695) (Campylobacter pylori)).